We begin with the raw amino-acid sequence, 163 residues long: ATP synthase subunit b 1 (163 aa).

Residues 7 to 27 (AETWVAIAFVILLGVFAYLGV) form a helical membrane-spanning segment.

Belongs to the ATPase B chain family. As to quaternary structure, F-type ATPases have 2 components, F(1) - the catalytic core - and F(0) - the membrane proton channel. F(1) has five subunits: alpha(3), beta(3), gamma(1), delta(1), epsilon(1). F(0) has three main subunits: a(1), b(2) and c(10-14). The alpha and beta chains form an alternating ring which encloses part of the gamma chain. F(1) is attached to F(0) by a central stalk formed by the gamma and epsilon chains, while a peripheral stalk is formed by the delta and b chains.

The protein localises to the cell inner membrane. In terms of biological role, f(1)F(0) ATP synthase produces ATP from ADP in the presence of a proton or sodium gradient. F-type ATPases consist of two structural domains, F(1) containing the extramembraneous catalytic core and F(0) containing the membrane proton channel, linked together by a central stalk and a peripheral stalk. During catalysis, ATP synthesis in the catalytic domain of F(1) is coupled via a rotary mechanism of the central stalk subunits to proton translocation. Component of the F(0) channel, it forms part of the peripheral stalk, linking F(1) to F(0). This chain is ATP synthase subunit b 1, found in Rhodopseudomonas palustris (strain ATCC BAA-98 / CGA009).